A 670-amino-acid chain; its full sequence is Sodium, potassium, lithium and rubidium/H(+) antiporter (670 aa).

A run of 11 helical transmembrane segments spans residues leucine 5–isoleucine 27, glycine 46–phenylalanine 66, proline 83–isoleucine 103, tryptophan 105–threonine 125, alanine 156–leucine 176, serine 182–isoleucine 202, phenylalanine 228–glycine 248, isoleucine 276–valine 296, tyrosine 314–tryptophan 334, leucine 355–proline 375, and leucine 389–leucine 409.

It belongs to the monovalent cation:proton antiporter 1 (CPA1) transporter (TC 2.A.36) family. Nhak (TC 2.A.36.3.2) subfamily.

The protein localises to the cell membrane. In terms of biological role, transporter involved in the efflux of sodium, potassium, lithium and rubidium. In Bacillus subtilis (strain 168), this protein is Sodium, potassium, lithium and rubidium/H(+) antiporter (nhaK).